We begin with the raw amino-acid sequence, 374 residues long: Alanine racemase (374 aa).

Lys-35 acts as the Proton acceptor; specific for D-alanine in catalysis. Position 35 is an N6-(pyridoxal phosphate)lysine (Lys-35). Arg-130 lines the substrate pocket. Tyr-261 serves as the catalytic Proton acceptor; specific for L-alanine. Position 309 (Met-309) interacts with substrate.

Belongs to the alanine racemase family. It depends on pyridoxal 5'-phosphate as a cofactor.

It carries out the reaction L-alanine = D-alanine. The protein operates within amino-acid biosynthesis; D-alanine biosynthesis; D-alanine from L-alanine: step 1/1. Catalyzes the interconversion of L-alanine and D-alanine. May also act on other amino acids. This is Alanine racemase (alr) from Albidiferax ferrireducens (strain ATCC BAA-621 / DSM 15236 / T118) (Rhodoferax ferrireducens).